The sequence spans 502 residues: MEFSVKSGSPEKQRSACIVVGVYEPRRLSGIAEQLDKISEGYISNLLRRGDLEGKPGQMLLLHHVPNVLSERVLLVGCGKERELDERQYKQIITKTISTLNETGSMEAVCFLTELHVKGRDTYWKVRQAVETTQASLYSFDALKTRKGETRRPLRKMVFNVPTRKELTIGERAVEHGMAVSAGMHLCRDVANMPPNICNPAYLASQARQMAETHDKLKVTTIGEEQMAKLGMNSYLAVGRGSSNESIMTVMEYKGAVDSADKPIVLVGKGLTFDSGGISLKPGEAMDEMKYDMGGAAGVIGAMKALCEMNLPINVIGILAGCENMPSGNSYRPGDILTTMSGQTVEVLNTDAEGRLVLCDVLTYVERFEPELVIDTATLTGACVIALGKHASGLFSSHNPLAHELLNAGEQSGDRAWRMPLWEEYQDMLDSPFADMTNLGGRPAGSITAACFLSRFTKKYNWAHLDVAGTAWNSGANKGSTGRPVPILSQFLINRSGVEISE.

Mn(2+) is bound by residues K269 and D274. K281 is an active-site residue. Residues D292, D351, and E353 each coordinate Mn(2+). Residue R355 is part of the active site.

It belongs to the peptidase M17 family. Mn(2+) is required as a cofactor.

The protein localises to the cytoplasm. The catalysed reaction is Release of an N-terminal amino acid, Xaa-|-Yaa-, in which Xaa is preferably Leu, but may be other amino acids including Pro although not Arg or Lys, and Yaa may be Pro. Amino acid amides and methyl esters are also readily hydrolyzed, but rates on arylamides are exceedingly low.. It carries out the reaction Release of an N-terminal amino acid, preferentially leucine, but not glutamic or aspartic acids.. Presumably involved in the processing and regular turnover of intracellular proteins. Catalyzes the removal of unsubstituted N-terminal amino acids from various peptides. In Shewanella denitrificans (strain OS217 / ATCC BAA-1090 / DSM 15013), this protein is Probable cytosol aminopeptidase.